The primary structure comprises 243 residues: MILFPAIDLKDGQCVRLKLGDMDQATIYNEDPAAQAKAFEDQGFEWLHVVDLNGAFAGESVNGTAVEAILKATKNPVQLGGGIRTLAHIENWLSRGLRRVILGTVAVRDPALVMEACKAFPGQVAVGIDAKGGKVAVEGWAEASRLGVIELAKKFEGAGVAAIIYTDIDRDGVLAGINWDSTLALAEAVSIPVIASGGLASMEDIRRLATPEMRKLEGAISGRALYDGRIDPAEALSVLRAAA.

Residue Asp-8 is the Proton acceptor of the active site. The Proton donor role is filled by Asp-129.

This sequence belongs to the HisA/HisF family.

The protein resides in the cytoplasm. The enzyme catalyses 1-(5-phospho-beta-D-ribosyl)-5-[(5-phospho-beta-D-ribosylamino)methylideneamino]imidazole-4-carboxamide = 5-[(5-phospho-1-deoxy-D-ribulos-1-ylimino)methylamino]-1-(5-phospho-beta-D-ribosyl)imidazole-4-carboxamide. It functions in the pathway amino-acid biosynthesis; L-histidine biosynthesis; L-histidine from 5-phospho-alpha-D-ribose 1-diphosphate: step 4/9. The protein is 1-(5-phosphoribosyl)-5-[(5-phosphoribosylamino)methylideneamino] imidazole-4-carboxamide isomerase of Brucella abortus (strain 2308).